Here is a 239-residue protein sequence, read N- to C-terminus: 3-dehydroquinate dehydratase (239 aa).

Residues Glu-35–Arg-37 and Arg-70 contribute to the 3-dehydroquinate site. His-133 serves as the catalytic Proton donor/acceptor. Lys-160 serves as the catalytic Schiff-base intermediate with substrate. 3-dehydroquinate-binding residues include Arg-202 and Gln-225.

Belongs to the type-I 3-dehydroquinase family. In terms of assembly, homodimer.

The enzyme catalyses 3-dehydroquinate = 3-dehydroshikimate + H2O. It functions in the pathway metabolic intermediate biosynthesis; chorismate biosynthesis; chorismate from D-erythrose 4-phosphate and phosphoenolpyruvate: step 3/7. Its function is as follows. Involved in the third step of the chorismate pathway, which leads to the biosynthesis of aromatic amino acids. Catalyzes the cis-dehydration of 3-dehydroquinate (DHQ) and introduces the first double bond of the aromatic ring to yield 3-dehydroshikimate. The protein is 3-dehydroquinate dehydratase of Staphylococcus saprophyticus subsp. saprophyticus (strain ATCC 15305 / DSM 20229 / NCIMB 8711 / NCTC 7292 / S-41).